Reading from the N-terminus, the 288-residue chain is Small ribosomal subunit protein uS2 (288 aa).

The tract at residues 255-288 (ANNRDHKNNKNNSTIDNAENLKEENLVGGSNNES) is disordered.

This sequence belongs to the universal ribosomal protein uS2 family.

The polypeptide is Small ribosomal subunit protein uS2 (Ehrlichia chaffeensis (strain ATCC CRL-10679 / Arkansas)).